The sequence spans 307 residues: Ethylmalonyl-CoA decarboxylase (307 aa).

Position 2 is an N-acetylalanine (alanine 2). Lysine 217 is subject to N6-acetyllysine; alternate. N6-succinyllysine; alternate is present on lysine 217. N6-succinyllysine is present on lysine 301.

It belongs to the enoyl-CoA hydratase/isomerase family.

Its subcellular location is the cytoplasm. The protein localises to the cytosol. The catalysed reaction is (2S)-ethylmalonyl-CoA + H(+) = butanoyl-CoA + CO2. The enzyme catalyses (S)-methylmalonyl-CoA + H(+) = propanoyl-CoA + CO2. It catalyses the reaction (2R)-ethylmalonyl-CoA + H(+) = butanoyl-CoA + CO2. Its function is as follows. Decarboxylates ethylmalonyl-CoA, a potentially toxic metabolite, to form butyryl-CoA, suggesting it might be involved in metabolite proofreading. Acts preferentially on (S)-ethylmalonyl-CoA but also has some activity on the (R)-isomer. Also has methylmalonyl-CoA decarboxylase activity at lower level. This chain is Ethylmalonyl-CoA decarboxylase (ECHDC1), found in Homo sapiens (Human).